Reading from the N-terminus, the 388-residue chain is Ferrochelatase (388 aa).

H196 and E277 together coordinate Fe cation.

Belongs to the ferrochelatase family.

It localises to the cytoplasm. It carries out the reaction heme b + 2 H(+) = protoporphyrin IX + Fe(2+). It participates in porphyrin-containing compound metabolism; protoheme biosynthesis; protoheme from protoporphyrin-IX: step 1/1. Functionally, catalyzes the ferrous insertion into protoporphyrin IX. The sequence is that of Ferrochelatase from Nostoc punctiforme (strain ATCC 29133 / PCC 73102).